Here is a 202-residue protein sequence, read N- to C-terminus: Transcriptional regulator GfcR 2 (202 aa).

The protein belongs to the purine/pyrimidine phosphoribosyltransferase family. GfcR subfamily.

This chain is Transcriptional regulator GfcR 2, found in Methanosarcina barkeri (strain Fusaro / DSM 804).